Here is a 320-residue protein sequence, read N- to C-terminus: NAC domain-containing protein 18 (320 aa).

The segment at 1 to 22 (MESTDSSGGPPPPQPNLPPGFR) is disordered. A compositionally biased stretch (pro residues) spans 9–18 (GPPPPQPNLP). One can recognise an NAC domain in the interval 17-177 (LPPGFRFHPT…DWVLCRIYKK (161 aa)). The DNA-binding element occupies 118–183 (VGVKKALVFY…IYKKNNSTAS (66 aa)).

As to expression, restricted primarily to the region of the embryo including the SAM. Expressed in the outer integument, but seems not expressed in the embryo at the torpedo stage.

The protein localises to the nucleus. Functionally, may encode a transcription factor involved in the elaboration of shoot apical meristems (SAM). Together with NAC056/NARS1, regulates embryogenesis by regulating the development and degeneration of ovule integuments, a process required for intertissue communication between the embryo and the maternal integument. In Arabidopsis thaliana (Mouse-ear cress), this protein is NAC domain-containing protein 18 (NAC018).